Here is a 430-residue protein sequence, read N- to C-terminus: Adenylosuccinate synthetase (430 aa).

GTP-binding positions include 13-19 and 41-43; these read GDEGKGK and GHT. Asp14 acts as the Proton acceptor in catalysis. Residues Asp14 and Gly41 each contribute to the Mg(2+) site. IMP-binding positions include 14–17, 39–42, Thr130, Arg144, Gln225, Thr240, and Arg304; these read DEGK and NAGH. The active-site Proton donor is His42. 300–306 is a substrate binding site; the sequence is STTGRKR. GTP-binding positions include Arg306, 332 to 334, and 414 to 416; these read KLD and STG.

Belongs to the adenylosuccinate synthetase family. As to quaternary structure, homodimer. The cofactor is Mg(2+).

The protein resides in the cytoplasm. The enzyme catalyses IMP + L-aspartate + GTP = N(6)-(1,2-dicarboxyethyl)-AMP + GDP + phosphate + 2 H(+). It participates in purine metabolism; AMP biosynthesis via de novo pathway; AMP from IMP: step 1/2. Plays an important role in the de novo pathway of purine nucleotide biosynthesis. Catalyzes the first committed step in the biosynthesis of AMP from IMP. The chain is Adenylosuccinate synthetase from Buchnera aphidicola subsp. Schizaphis graminum (strain Sg).